Consider the following 488-residue polypeptide: Ergochrome gene cluster transcriptional regulator CPUR_05433 (488 aa).

The interval 1 to 29 is disordered; that stretch reads MDHSIGGRNCQSGGTTASAPRSTGSDEFP. Residues 9–25 are compositionally biased toward polar residues; the sequence is NCQSGGTTASAPRSTGS. A DNA-binding region (zn(2)-C6 fungal-type) is located at residues 36-63; it reads CHACSLSKVRCSKEKPSCSRCAKRGVPC.

The protein localises to the nucleus. Functionally, transcription factor; part of the gene cluster responsible for the typical purple-black color of the ergot sclerotia. The ergochrome gene cluster produces several ergot pigments including the yellow ergochrome secalonic acid and its derivatives, as well as the red anthraquinones endocrocin and clavorubin. The sequence is that of Ergochrome gene cluster transcriptional regulator CPUR_05433 from Claviceps purpurea (strain 20.1) (Ergot fungus).